The chain runs to 449 residues: METRGRRPAALQHQQDQPQAHPGQRAARSAPLHRDPDYADEDPAPVERHDPGPSGRAPTTAVQRKPPQPAKRGDMLDRDAVEQVTELWDRLELLGQTLKSMPTADGLKPLKNFASLQELLSLGGERLLADLVRENMRVRDMLNEVAPLLRDDGSCSSLNYQLHPVIGVIYGPTGCGKSQLLRNLLSSQLISPTPETVFFIAPQVDMIPPSELKAWEMQICEGNYAPGPDGTIIPQSGTLRPRFVKMAYDDLILEHNYDVSDPRNIFAQAAARGPIAIIMDECMENLGGHKGVSKFFHAFPSKLHDKFPKCTGYTVLVVLHNMNPRRDMAGNIANLKIQSKMHLISPRMHPSQLNRFVNTYTKGLPLAISLLLKDIFRHHAQRSCYDWIIYNTTPQHEALQWCYLHPRDGLMPMYLNIQSHLYHVLEKIHRTLNDRDRWSRAYRARKTPK.

The tract at residues 1 to 78 is disordered; sequence METRGRRPAA…PAKRGDMLDR (78 aa). 171-178 provides a ligand contact to ATP; sequence GPTGCGKS. A DNA-binding region spans residues 440–449; that stretch reads RAYRARKTPK.

The protein belongs to the adenoviridae packaging protein 1 family. In terms of assembly, homodimer. Part of a genome packaging complex composed of packaging proteins 1, 2 and 3; this complex specifically binds to the packaging sequence on the left end of viral genomic DNA and performs packaging of the viral genome. Interacts with protein 33K.

The protein resides in the virion. It is found in the host nucleus. It localises to the host nucleoplasm. The protein localises to the host nucleolus. Component of the packaging machinery which encapsidates the viral DNA into preformed capsids and transcriptional activator of the viral major late promoter (MLP). Binds, along with packaging proteins 2 and 3, to the specific packaging sequence on the left end of viral genomic DNA and displays ATPase activity thereby providing the power stroke of the packaging machinery. The activity of packaging protein IVa2 is stimulated by protein 33K which acts as a terminase. May be the protein that pumps DNA into the capsid powered by ATP hydrolysis. Specifically binds to the 5'-CG-3' nucleotides of the repeats making up the packaging sequence. Component of the DEF-A and DEF-B transcription factors that bind downstream elements of the major late promoter (MLP), and stimulate transcription from the MLP after initiation of viral DNA replication. DEF-A is a heterodimer packaging proteins 1 and 2 and DEF-B is a homodimer of packaging protein 1. The chain is Packaging protein 1 from Human adenovirus C serotype 5 (HAdV-5).